The following is a 238-amino-acid chain: MADS-box protein 04g005320 (238 aa).

The region spanning 1 to 61 (MGRGKVELKR…GKLYEFCSTS (61 aa)) is the MADS-box domain. A K-box domain is found at 87–177 (SQNNYQEYMK…KTKLEENSVA (91 aa)).

The protein localises to the nucleus. In terms of biological role, probable MADS-box transcription factor that functions with J2 and EJ2 in meristem maturation. The polypeptide is MADS-box protein 04g005320 (Solanum lycopersicum (Tomato)).